Here is a 302-residue protein sequence, read N- to C-terminus: Ribosome-binding factor PSRP1, chloroplastic (302 aa).

Residues 1-66 (MATLCTSAIN…SRNKPNVVCM (66 aa)) constitute a chloroplast transit peptide.

As to quaternary structure, binds to the mRNA channel of the chloroplast small ribosomal subunit and interacts with 16S sRNA nucleotides at the A-site and P-site.

It localises to the plastid. Its subcellular location is the chloroplast stroma. Ribosome-binding factor involved in light- and temperature-dependent control of protein synthesis. Interacts with 16S sRNA nucleotides at the A-site and P-site, where it protects the decoding center and inhibits translation by preventing tRNA binding. Stabilizes 70S ribosomes against dissociation. May be recycled by the combined action of ribosome-recycling factor (RRF) and EF-G. This is Ribosome-binding factor PSRP1, chloroplastic (PSRP1) from Spinacia oleracea (Spinach).